Consider the following 589-residue polypeptide: MLALDETEINDGAKRWIVSIAKHLNPSSIYVCDGTKEEFDDLASAMVKDGEMIKLNEKNFKNSYLYRSNATDVARTEERTFISARDKSFVGPLNNFLPLDRVKQVWNQFFKGAYTGKTMFVIPYALSSPESKFADFGIEVTDSKYVVLNLHYITRMGKGVIEKIGDRFIKGVHATGNLDPGNKFIIHMPWEKPEGVDADILSVNTNYGGNALLSKKCHALRIASVRAREEGWLAEHMLLLEVKDPQGKSHFITGAFPSASGKTNLAMISPPKDYRDAGWSTRLISDDISWIKIVDGKFMATNPENGFFAVVPGTNYNTNKNAMATLSKNTIFTNVGLTMSGDPWWEGLDPVYDELYDWKGNKRKIGGEPIAHPNSRYTSPLTNYPYLSDLYEDPEGVPVSAILFGGRRATLIPLVFEAFNWNHGVFLGATMGVERTAASEGKVGDLRRDPMAMRPFCGYNINEYFRHWIEIGERSKNKPKIFYVNWFRRRADGTFIWPGFAENFRVLEWIIYRTSHNDNAVETPIGYIPESLNLAGLNISEEDVKELFRIDKEGWKEEMNEIQKYFSELGNVPEEILKEFELEKKRLGY.

Substrate is bound by residues arginine 75 and 207–209 (YGG). The Mn(2+) site is built by lysine 216 and histidine 236. Substrate is bound at residue serine 258. Position 259–264 (259–264 (ASGKTN)) interacts with GTP. Serine 260 is a catalytic residue. Aspartate 287 lines the Mn(2+) pocket. Residue 374 to 376 (NSR) coordinates substrate. GTP-binding positions include arginine 376, arginine 407, and 500–503 (FAEN).

This sequence belongs to the phosphoenolpyruvate carboxykinase [GTP] family. The cofactor is Mn(2+).

The protein resides in the cytoplasm. It catalyses the reaction oxaloacetate + GTP = phosphoenolpyruvate + GDP + CO2. The protein operates within carbohydrate biosynthesis; gluconeogenesis. Catalyzes the conversion of oxaloacetate (OAA) to phosphoenolpyruvate (PEP), the rate-limiting step in the metabolic pathway that produces glucose from lactate and other precursors derived from the citric acid cycle. The chain is Phosphoenolpyruvate carboxykinase [GTP] from Thermoplasma volcanium (strain ATCC 51530 / DSM 4299 / JCM 9571 / NBRC 15438 / GSS1).